A 510-amino-acid polypeptide reads, in one-letter code: Light-independent protochlorophyllide reductase subunit B (510 aa).

Residue aspartate 36 participates in [4Fe-4S] cluster binding. The active-site Proton donor is aspartate 297. Glycine 432 to methionine 433 is a binding site for substrate.

This sequence belongs to the ChlB/BchB/BchZ family. Protochlorophyllide reductase is composed of three subunits; ChlL, ChlN and ChlB. Forms a heterotetramer of two ChlB and two ChlN subunits. [4Fe-4S] cluster is required as a cofactor.

It is found in the plastid. The protein localises to the chloroplast. It carries out the reaction chlorophyllide a + oxidized 2[4Fe-4S]-[ferredoxin] + 2 ADP + 2 phosphate = protochlorophyllide a + reduced 2[4Fe-4S]-[ferredoxin] + 2 ATP + 2 H2O. It functions in the pathway porphyrin-containing compound metabolism; chlorophyll biosynthesis (light-independent). Functionally, component of the dark-operative protochlorophyllide reductase (DPOR) that uses Mg-ATP and reduced ferredoxin to reduce ring D of protochlorophyllide (Pchlide) to form chlorophyllide a (Chlide). This reaction is light-independent. The NB-protein (ChlN-ChlB) is the catalytic component of the complex. This Pinus thunbergii (Japanese black pine) protein is Light-independent protochlorophyllide reductase subunit B.